The following is a 312-amino-acid chain: tRNA U34 carboxymethyltransferase (312 aa).

Residues Lys-88, Trp-102, Lys-107, Gly-127, 149–151 (DPS), 177–178 (LD), Met-191, Tyr-195, and Arg-304 each bind carboxy-S-adenosyl-L-methionine.

Belongs to the class I-like SAM-binding methyltransferase superfamily. CmoB family. As to quaternary structure, homotetramer.

The enzyme catalyses carboxy-S-adenosyl-L-methionine + 5-hydroxyuridine(34) in tRNA = 5-carboxymethoxyuridine(34) in tRNA + S-adenosyl-L-homocysteine + H(+). Functionally, catalyzes carboxymethyl transfer from carboxy-S-adenosyl-L-methionine (Cx-SAM) to 5-hydroxyuridine (ho5U) to form 5-carboxymethoxyuridine (cmo5U) at position 34 in tRNAs. The protein is tRNA U34 carboxymethyltransferase of Dichelobacter nodosus (strain VCS1703A).